We begin with the raw amino-acid sequence, 158 residues long: NAD(P)H-quinone oxidoreductase subunit J, chloroplastic (158 aa).

This sequence belongs to the complex I 30 kDa subunit family. NDH is composed of at least 16 different subunits, 5 of which are encoded in the nucleus.

The protein localises to the plastid. It is found in the chloroplast thylakoid membrane. It carries out the reaction a plastoquinone + NADH + (n+1) H(+)(in) = a plastoquinol + NAD(+) + n H(+)(out). It catalyses the reaction a plastoquinone + NADPH + (n+1) H(+)(in) = a plastoquinol + NADP(+) + n H(+)(out). In terms of biological role, NDH shuttles electrons from NAD(P)H:plastoquinone, via FMN and iron-sulfur (Fe-S) centers, to quinones in the photosynthetic chain and possibly in a chloroplast respiratory chain. The immediate electron acceptor for the enzyme in this species is believed to be plastoquinone. Couples the redox reaction to proton translocation, and thus conserves the redox energy in a proton gradient. The polypeptide is NAD(P)H-quinone oxidoreductase subunit J, chloroplastic (Cucumis sativus (Cucumber)).